A 302-amino-acid chain; its full sequence is 4-diphosphocytidyl-2-C-methyl-D-erythritol kinase (302 aa).

Lysine 13 is an active-site residue. Residue 101 to 111 participates in ATP binding; that stretch reads PVASGIGGGSS. Aspartate 143 is a catalytic residue.

This sequence belongs to the GHMP kinase family. IspE subfamily.

It carries out the reaction 4-CDP-2-C-methyl-D-erythritol + ATP = 4-CDP-2-C-methyl-D-erythritol 2-phosphate + ADP + H(+). It participates in isoprenoid biosynthesis; isopentenyl diphosphate biosynthesis via DXP pathway; isopentenyl diphosphate from 1-deoxy-D-xylulose 5-phosphate: step 3/6. Its function is as follows. Catalyzes the phosphorylation of the position 2 hydroxy group of 4-diphosphocytidyl-2C-methyl-D-erythritol. The chain is 4-diphosphocytidyl-2-C-methyl-D-erythritol kinase from Granulibacter bethesdensis (strain ATCC BAA-1260 / CGDNIH1).